Consider the following 246-residue polypeptide: tRNA1(Val) (adenine(37)-N6)-methyltransferase (246 aa).

It belongs to the methyltransferase superfamily. tRNA (adenine-N(6)-)-methyltransferase family.

The protein resides in the cytoplasm. It catalyses the reaction adenosine(37) in tRNA1(Val) + S-adenosyl-L-methionine = N(6)-methyladenosine(37) in tRNA1(Val) + S-adenosyl-L-homocysteine + H(+). Functionally, specifically methylates the adenine in position 37 of tRNA(1)(Val) (anticodon cmo5UAC). The polypeptide is tRNA1(Val) (adenine(37)-N6)-methyltransferase (Shewanella halifaxensis (strain HAW-EB4)).